Consider the following 227-residue polypeptide: Nudix hydrolase 27, chloroplastic (227 aa).

A chloroplast-targeting transit peptide spans 1 to 44; that stretch reads MAVKASGFIGKSAISVHLDFSSFPVKFSCLKQFSVSSPKPLVVL. A Nudix hydrolase domain is found at 61 to 208; sequence GYRKNVGICL…KRPVYEHVIK (148 aa). Positions 94–115 match the Nudix box motif; the sequence is GGADEGEDLRNAAFRELREETG. Residues Glu109 and Glu113 each contribute to the Mn(2+) site.

This sequence belongs to the Nudix hydrolase family. Mg(2+) serves as cofactor. The cofactor is Mn(2+). Expressed in roots, leaves, stems and inflorescences.

Its subcellular location is the plastid. It is found in the chloroplast. Its function is as follows. Mediates the hydrolysis of some nucleoside diphosphate derivatives. Can use diadenosine 5',5'''-P(1)P(5) pentaphosphate (Ap(5)A) as substrates. This chain is Nudix hydrolase 27, chloroplastic (NUDT27), found in Arabidopsis thaliana (Mouse-ear cress).